Here is a 77-residue protein sequence, read N- to C-terminus: U8-lycotoxin-Ls1m (77 aa).

Residues M1–A20 form the signal peptide. Residues Q21 to K26 constitute a propeptide that is removed on maturation.

This sequence belongs to the neurotoxin 19 (CSTX) family. 08 (U8-Lctx) subfamily. In terms of processing, contains 4 disulfide bonds. In terms of tissue distribution, expressed by the venom gland.

The protein resides in the secreted. The polypeptide is U8-lycotoxin-Ls1m (Lycosa singoriensis (Wolf spider)).